Here is a 292-residue protein sequence, read N- to C-terminus: Ribosome-inactivating protein saporin-2 (292 aa).

An N-terminal signal peptide occupies residues 1 to 24; that stretch reads MKIYVVATIAWILLQFSAWTTTDA. Glutamate 200 is an active-site residue.

The protein belongs to the ribosome-inactivating protein family. Type 1 RIP subfamily.

The catalysed reaction is Endohydrolysis of the N-glycosidic bond at one specific adenosine on the 28S rRNA.. In terms of biological role, ribosome-inactivating protein of type 1, inhibits protein synthesis in animal cells. Useful as immunotoxin for pharmacological applications. This is Ribosome-inactivating protein saporin-2 (SAP2) from Saponaria officinalis (Common soapwort).